Here is a 395-residue protein sequence, read N- to C-terminus: Protein-arginine rhamnosyltransferase (395 aa).

Residues 19–22 (NYGD), Tyr205, Gln272, and 288–292 (RGEDS) contribute to the dTDP-beta-L-rhamnose site. Catalysis depends on Asp22, which acts as the Proton acceptor. Glu290 is an active-site residue.

The protein belongs to the glycosyltransferase 104 family.

It catalyses the reaction dTDP-beta-L-rhamnose + L-arginyl-[protein] = N(omega)-(alpha-L-rhamnosyl)-L-arginyl-[protein] + dTDP + H(+). In terms of biological role, protein-arginine rhamnosyltransferase that catalyzes the transfer of a single rhamnose to elongation factor P (EF-P) on 'Lys-32', a modification required for EF-P-dependent rescue of polyproline stalled ribosomes. This chain is Protein-arginine rhamnosyltransferase, found in Shewanella oneidensis (strain ATCC 700550 / JCM 31522 / CIP 106686 / LMG 19005 / NCIMB 14063 / MR-1).